The sequence spans 150 residues: Centrin-B (150 aa).

EF-hand domains follow at residues 12 to 46, 80 to 114, and 115 to 150; these read DQIS…LGCE, DSMS…IGEE, and CSDS…KKVL. Residues Asp128, Asp130, Asp132, and Glu139 each coordinate Ca(2+).

The protein belongs to the centrin family.

It localises to the cytoplasm. Its subcellular location is the cytoskeleton. The protein resides in the microtubule organizing center. It is found in the centrosome. Plays a fundamental role in microtubule-organizing center structure and function. The chain is Centrin-B (cenB) from Dictyostelium discoideum (Social amoeba).